Consider the following 483-residue polypeptide: Proline--tRNA ligase (483 aa).

The protein belongs to the class-II aminoacyl-tRNA synthetase family. ProS type 3 subfamily. In terms of assembly, homodimer.

It is found in the cytoplasm. It carries out the reaction tRNA(Pro) + L-proline + ATP = L-prolyl-tRNA(Pro) + AMP + diphosphate. Its function is as follows. Catalyzes the attachment of proline to tRNA(Pro) in a two-step reaction: proline is first activated by ATP to form Pro-AMP and then transferred to the acceptor end of tRNA(Pro). This is Proline--tRNA ligase from Sulfolobus acidocaldarius (strain ATCC 33909 / DSM 639 / JCM 8929 / NBRC 15157 / NCIMB 11770).